Here is a 694-residue protein sequence, read N- to C-terminus: Methionine--tRNA ligase (694 aa).

The short motif at 12-22 is the 'HIGH' region element; sequence PYANGPLHLGH. 4 residues coordinate Zn(2+): C143, C146, C156, and C159. The short motif at 330–334 is the 'KMSKS' region element; sequence KMSKS. K333 provides a ligand contact to ATP. The tract at residues 550 to 577 is disordered; sequence LAAPATPATASKPAPAKADAKPAAAANP. A compositionally biased stretch (low complexity) spans 551–575; the sequence is AAPATPATASKPAPAKADAKPAAAA. Positions 591–694 constitute a tRNA-binding domain; that stretch reads DFAKLDLRIG…SGAQPGMPVR (104 aa).

The protein belongs to the class-I aminoacyl-tRNA synthetase family. MetG type 1 subfamily. As to quaternary structure, homodimer. The cofactor is Zn(2+).

The protein resides in the cytoplasm. It catalyses the reaction tRNA(Met) + L-methionine + ATP = L-methionyl-tRNA(Met) + AMP + diphosphate. Is required not only for elongation of protein synthesis but also for the initiation of all mRNA translation through initiator tRNA(fMet) aminoacylation. This is Methionine--tRNA ligase from Xanthomonas axonopodis pv. citri (strain 306).